A 65-amino-acid chain; its full sequence is Conotoxin mr5.1b (65 aa).

Positions 1 to 19 are cleaved as a signal peptide; sequence MRCVPVFVILLLLIASAPS. A propeptide spanning residues 20-48 is cleaved from the precursor; the sequence is VDARLKTKDDMPLPSSHANIKRTLQMLRN. Glutamate 60 carries the post-translational modification 4-carboxyglutamate.

Belongs to the conotoxin T superfamily. Contains 2 disulfide bonds that can be either 'C1-C3, C2-C4' or 'C1-C4, C2-C3', since these disulfide connectivities have been observed for conotoxins with cysteine framework V (for examples, see AC P0DQQ7 and AC P81755). In terms of tissue distribution, expressed by the venom duct.

It is found in the secreted. This chain is Conotoxin mr5.1b, found in Conus marmoreus (Marble cone).